A 102-amino-acid chain; its full sequence is RNA-binding protein Hfq (102 aa).

One can recognise a Sm domain in the interval 9 to 68 (DPFLNALRRERVPVSIYLVNGIKLQGQIESFDQFVILLKNTVSQMVYKHAISTVVPSRPV). The segment at 63–102 (VPSRPVSHHSNNASGGTSSNYHHGSSAQNTSAQQDSEETE) is disordered. Over residues 70-96 (HHSNNASGGTSSNYHHGSSAQNTSAQQ) the composition is skewed to polar residues.

Belongs to the Hfq family. As to quaternary structure, homohexamer.

Functionally, RNA chaperone that binds small regulatory RNA (sRNAs) and mRNAs to facilitate mRNA translational regulation in response to envelope stress, environmental stress and changes in metabolite concentrations. Also binds with high specificity to tRNAs. The sequence is that of RNA-binding protein Hfq from Shigella boydii serotype 18 (strain CDC 3083-94 / BS512).